Consider the following 358-residue polypeptide: DNA polymerase IV (358 aa).

One can recognise a UmuC domain in the interval 4–185 (IIHIDMDCYF…LSLRKIPGVG (182 aa)). Mg(2+)-binding residues include D8 and D103. The active site involves E104.

Belongs to the DNA polymerase type-Y family. As to quaternary structure, monomer. Requires Mg(2+) as cofactor.

Its subcellular location is the cytoplasm. The enzyme catalyses DNA(n) + a 2'-deoxyribonucleoside 5'-triphosphate = DNA(n+1) + diphosphate. Poorly processive, error-prone DNA polymerase involved in untargeted mutagenesis. Copies undamaged DNA at stalled replication forks, which arise in vivo from mismatched or misaligned primer ends. These misaligned primers can be extended by PolIV. Exhibits no 3'-5' exonuclease (proofreading) activity. May be involved in translesional synthesis, in conjunction with the beta clamp from PolIII. In Shewanella sp. (strain W3-18-1), this protein is DNA polymerase IV.